The chain runs to 666 residues: uncharacterized protein (666 aa).

Belongs to the MG032/MG096/MG288 family.

This is an uncharacterized protein from Mycoplasma pneumoniae (strain ATCC 29342 / M129 / Subtype 1) (Mycoplasmoides pneumoniae).